Reading from the N-terminus, the 263-residue chain is MNKQAATEKLVAVDIGNTSVNIGIFEGEQLLANWHLGSVAQRMADEYASLLLGLLQHADIQAGELNRVIMCSVVPPLTTTFEEVFKTYFKATPLVVGAGIKSGVKIRMDNPREVGADRIVNAAAARVLYPGACIIVDMGTATTFDTLSESGEYIGGAIAPGIATSAQAIVEKTSKLPKIEIIHPAKAIGSNTVSAMQSGVYFGYIGLVEELVRRIQAELGQKARVVATGGYASLIAEGSRIFDIVRPDLTLQGLRFIYQMNKV.

14–21 (DIGNTSVN) contacts ATP. 115-118 (GADR) lines the substrate pocket. The Proton acceptor role is filled by Asp-117. Asp-137 lines the K(+) pocket. Residue Thr-140 coordinates ATP. Thr-192 serves as a coordination point for substrate.

Belongs to the type III pantothenate kinase family. As to quaternary structure, homodimer. NH4(+) serves as cofactor. Requires K(+) as cofactor.

The protein resides in the cytoplasm. The catalysed reaction is (R)-pantothenate + ATP = (R)-4'-phosphopantothenate + ADP + H(+). Its pathway is cofactor biosynthesis; coenzyme A biosynthesis; CoA from (R)-pantothenate: step 1/5. In terms of biological role, catalyzes the phosphorylation of pantothenate (Pan), the first step in CoA biosynthesis. This is Type III pantothenate kinase from Dehalococcoides mccartyi (strain CBDB1).